Reading from the N-terminus, the 139-residue chain is Transcription antitermination protein NusB (139 aa).

It belongs to the NusB family.

Involved in transcription antitermination. Required for transcription of ribosomal RNA (rRNA) genes. Binds specifically to the boxA antiterminator sequence of the ribosomal RNA (rrn) operons. The chain is Transcription antitermination protein NusB from Edwardsiella ictaluri (strain 93-146).